Here is a 319-residue protein sequence, read N- to C-terminus: MKKSITSLDLNLLLCLQLLMQERSVTKAAKRMNVTPSAVSKSLSKLRTWFDDPLFVNTPLGLTPTPLMVNMEQSLADWMQMSNQLLDKPHHESPRGLKFELAAESPLVMIMFNSLSQQIYQRYPQATIKVRNWDYDSLDAITRGEVDLGFTGRESHPRSRELLSLLPLSIDFEVLFSDLPWVWLREDHPALQEEWNLETFLRYPHISICWEQSDTWALDDVLQEMGRKRNIALSLPGFEQSLFMAAQPNHSLLATAPLYCQRYNQLHQLPLVARPLPFDAAQREKLMVPFTLLWHKRNSHNPKIIWLKETIKTLYSHLS.

The HTH lysR-type domain maps to 8–65; it reads LDLNLLLCLQLLMQERSVTKAAKRMNVTPSAVSKSLSKLRTWFDDPLFVNTPLGLTPT. The H-T-H motif DNA-binding region spans 25-44; the sequence is VTKAAKRMNVTPSAVSKSLS.

It belongs to the LysR transcriptional regulatory family.

Its function is as follows. Involved in anaerobic NO protection. This is HTH-type transcriptional regulator YidZ from Citrobacter koseri (strain ATCC BAA-895 / CDC 4225-83 / SGSC4696).